Here is a 149-residue protein sequence, read N- to C-terminus: 3-dehydroquinate dehydratase (149 aa).

Tyrosine 26 (proton acceptor) is an active-site residue. Positions 78, 84, and 91 each coordinate substrate. The active-site Proton donor is histidine 104. Substrate is bound by residues leucine 105–serine 106 and arginine 115.

It belongs to the type-II 3-dehydroquinase family. Homododecamer.

The catalysed reaction is 3-dehydroquinate = 3-dehydroshikimate + H2O. It functions in the pathway metabolic intermediate biosynthesis; chorismate biosynthesis; chorismate from D-erythrose 4-phosphate and phosphoenolpyruvate: step 3/7. Functionally, catalyzes a trans-dehydration via an enolate intermediate. The chain is 3-dehydroquinate dehydratase from Polynucleobacter necessarius subsp. necessarius (strain STIR1).